The following is a 319-amino-acid chain: Type II methyltransferase M.MpnI (319 aa).

The protein belongs to the N(4)/N(6)-methyltransferase family.

It catalyses the reaction a 2'-deoxyadenosine in DNA + S-adenosyl-L-methionine = an N(6)-methyl-2'-deoxyadenosine in DNA + S-adenosyl-L-homocysteine + H(+). Functionally, a methylase that recognizes the double-stranded sequence 5'-CTAT-3' and methylates A-3 on one strand; probably responsible for all of the methylation on this site in the genome. In Mycoplasma pneumoniae (strain ATCC 29342 / M129 / Subtype 1) (Mycoplasmoides pneumoniae), this protein is Type II methyltransferase M.MpnI.